The primary structure comprises 249 residues: Uridylate kinase (249 aa).

Residue 15–18 (KLSG) coordinates ATP. An involved in allosteric activation by GTP region spans residues 23 to 28 (GEEGFG). UMP is bound at residue glycine 57. Glycine 58 and arginine 62 together coordinate ATP. UMP is bound by residues aspartate 77 and 138–145 (TGNPFFTT). ATP-binding residues include threonine 165, phenylalanine 171, and aspartate 174.

Belongs to the UMP kinase family. Homohexamer.

The protein resides in the cytoplasm. It carries out the reaction UMP + ATP = UDP + ADP. It participates in pyrimidine metabolism; CTP biosynthesis via de novo pathway; UDP from UMP (UMPK route): step 1/1. Allosterically activated by GTP. Inhibited by UTP. Functionally, catalyzes the reversible phosphorylation of UMP to UDP. In Psychromonas ingrahamii (strain DSM 17664 / CCUG 51855 / 37), this protein is Uridylate kinase.